Consider the following 196-residue polypeptide: Mpv17-like protein (196 aa).

The Cytoplasmic portion of the chain corresponds to Met1–Pro16. Residues Pro16 to Val55 form a targeting to peroxisomes region. Residues Trp17 to Leu34 traverse the membrane as a helical segment. The Lumenal portion of the chain corresponds to Gln35–Arg50. Residues Val51–Leu67 form a helical membrane-spanning segment. Residues Arg68–Gln90 are Cytoplasmic-facing. Residues Val91 to Leu108 traverse the membrane as a helical segment. Residues Gln109 to Thr150 are Lumenal-facing. A helical membrane pass occupies residues Ala151–Ser167. At Gln168–Lys196 the chain is on the cytoplasmic side.

It belongs to the peroxisomal membrane protein PXMP2/4 family. In terms of tissue distribution, isoform 1 is detected in the kidney (at protein level). Isoform 1 and isoform 2 are expressed in the kidney, heart, liver, lung, pancreas and skeletal muscle.

It localises to the peroxisome membrane. Participates in reactive oxygen species metabolism by up- or down-regulation of the genes of antioxidant enzymes. Protective against the mitochondrial apoptotic cascade. The sequence is that of Mpv17-like protein (MPV17L) from Homo sapiens (Human).